Reading from the N-terminus, the 554-residue chain is Serine/threonine-protein kinase ROP18 (554 aa).

A helical transmembrane segment spans residues 17–40 (GLATLLPKTACLAGLNVALVFLLF). A Protein kinase domain is found at 252–531 (LVRGAPLGSG…PLQALETAAF (280 aa)). The ATP site is built by Gly-262, Ala-264, and Lys-281. A glycan (N-linked (GlcNAc...) asparagine) is linked at Asn-306. ATP is bound by residues Met-357, Ala-359, and Asp-362. N-linked (GlcNAc...) asparagine glycosylation is present at Asn-377. Asp-409 acts as the Proton acceptor in catalysis. Position 427 (Asp-427) interacts with ATP. Residue Asp-427 participates in Mg(2+) binding. Asn-434 carries an N-linked (GlcNAc...) asparagine glycan. An intrachain disulfide couples Cys-478 to Cys-497.

This sequence belongs to the protein kinase superfamily. Ser/Thr protein kinase family. As to quaternary structure, component of a complex at least composed of ROP18, GRA7 and ROP2. Component of a complex at least composed of ROP18 and ROP5. Interacts with GRA7 in the absence of ROP5. Interacts with mouse IRGB6 (TGTP1/TGTP2).

Its subcellular location is the parasitophorous vacuole membrane. It localises to the cytoplasmic vesicle. The protein resides in the secretory vesicle. The protein localises to the rhoptry. The enzyme catalyses L-threonyl-[protein] + ATP = O-phospho-L-threonyl-[protein] + ADP + H(+). It carries out the reaction L-seryl-[protein] + ATP = O-phospho-L-seryl-[protein] + ADP + H(+). With respect to regulation, kinase activity is enhanced by polymorphic pseudokinase ROP5. Functionally, protein kinase. Virulence factor. Mediates parasite survival in mouse macrophages and monocytes. Reduces the accumulation of mouse IRGA6 (IIGP1) and IRGB6 (TGTP1/TGTP2), immunity-related GTPases (IRGs) that protect mice from infection by certain intracellular pathogens, on the parasitophorous vacuole and IRG-mediated killing of parasites by mouse cells; probably in connection with ROP5. In complex with GRA7, targets IRGs to prevent IRG-mediated parasite killing by mouse cells. Phosphorylates mouse IRGA6 (IIGP1); its activity toward mouse IRGA6 is promoted by GRA7 or ROP5. Phosphorylates mouse IRGB6 (TGTP1/TGTP2). Phosphorylates mouse IRGB10 (GM12250). Does not affect IFN-gamma (IFNG)-mediated parasite killing in human cells that do not possess the large variety of IRGs. The chain is Serine/threonine-protein kinase ROP18 from Toxoplasma gondii.